A 216-amino-acid chain; its full sequence is Adenylate kinase (216 aa).

10-15 (GAGKGT) is an ATP binding site. The interval 30 to 59 (STGDIFRKNISENTPLGIEAKGYIDNGQLV) is NMP. AMP-binding positions include threonine 31, arginine 36, 57–59 (QLV), 85–88 (GFPR), and glutamine 92. An LID region spans residues 126 to 163 (GRRVCPSCGASYHVKFNPPTNEGKCDLCGSEVIQRKDD). Arginine 127 lines the ATP pocket. Zn(2+)-binding residues include cysteine 130 and cysteine 133. 136 to 137 (SY) is an ATP binding site. Zn(2+) is bound by residues cysteine 150 and cysteine 153. Residues arginine 160 and arginine 171 each coordinate AMP. An ATP-binding site is contributed by lysine 199.

This sequence belongs to the adenylate kinase family. In terms of assembly, monomer.

It localises to the cytoplasm. It catalyses the reaction AMP + ATP = 2 ADP. It functions in the pathway purine metabolism; AMP biosynthesis via salvage pathway; AMP from ADP: step 1/1. In terms of biological role, catalyzes the reversible transfer of the terminal phosphate group between ATP and AMP. Plays an important role in cellular energy homeostasis and in adenine nucleotide metabolism. This chain is Adenylate kinase, found in Clostridium beijerinckii (strain ATCC 51743 / NCIMB 8052) (Clostridium acetobutylicum).